The chain runs to 76 residues: Tautomerase PptA (76 aa).

The active-site Proton acceptor; via imino nitrogen is the proline 2.

Belongs to the 4-oxalocrotonate tautomerase family. PptA subfamily. Homodimer.

Its subcellular location is the cytoplasm. This chain is Tautomerase PptA, found in Pectobacterium carotovorum subsp. carotovorum (strain PC1).